The primary structure comprises 149 residues: Deoxyuridine 5'-triphosphate nucleotidohydrolase (149 aa).

Substrate is bound by residues 68–70 (RSG), Asn81, 85–87 (TID), and Lys95.

It belongs to the dUTPase family. Mg(2+) serves as cofactor.

It carries out the reaction dUTP + H2O = dUMP + diphosphate + H(+). It functions in the pathway pyrimidine metabolism; dUMP biosynthesis; dUMP from dCTP (dUTP route): step 2/2. This enzyme is involved in nucleotide metabolism: it produces dUMP, the immediate precursor of thymidine nucleotides and it decreases the intracellular concentration of dUTP so that uracil cannot be incorporated into DNA. The polypeptide is Deoxyuridine 5'-triphosphate nucleotidohydrolase (Bdellovibrio bacteriovorus (strain ATCC 15356 / DSM 50701 / NCIMB 9529 / HD100)).